Here is a 479-residue protein sequence, read N- to C-terminus: Isoprimeverose transporter (479 aa).

Transmembrane regions (helical) follow at residues 54–74 (MFFY…LFLV), 102–122 (PYWL…FTVP), 131–151 (VWAY…NIPI), 174–194 (FMGT…VAYF), 205–225 (WFMV…IVFA), 253–273 (WPWV…QTRS), 289–309 (LASF…ITPW), 321–341 (LMGM…SKAL), 348–368 (VGTI…AVML), 397–417 (FGMG…GYVA), and 431–451 (MNYV…LLFY).

It belongs to the sodium:galactoside symporter (TC 2.A.2) family.

Its subcellular location is the cell membrane. Its function is as follows. Involved in the metabolism of isoprimeverose. Transports isoprimeverose into the cell. Transport is driven by the proton motive force generated by malolactic fermentation. Cannot transport D-xylose. The protein is Isoprimeverose transporter of Lactiplantibacillus pentosus (Lactobacillus pentosus).